Reading from the N-terminus, the 362-residue chain is Peptide chain release factor 1 (362 aa).

N5-methylglutamine is present on Gln-238.

The protein belongs to the prokaryotic/mitochondrial release factor family. In terms of processing, methylated by PrmC. Methylation increases the termination efficiency of RF1.

Its subcellular location is the cytoplasm. Peptide chain release factor 1 directs the termination of translation in response to the peptide chain termination codons UAG and UAA. The polypeptide is Peptide chain release factor 1 (Psychrobacter arcticus (strain DSM 17307 / VKM B-2377 / 273-4)).